The chain runs to 227 residues: Protein FdhD (227 aa).

Phe-210 to Lys-215 is a binding site for Mo-bis(molybdopterin guanine dinucleotide).

The protein belongs to the FdhD family.

Its subcellular location is the cytoplasm. Its function is as follows. Required for formate dehydrogenase (FDH) activity. The chain is Protein FdhD from Methanocaldococcus jannaschii (strain ATCC 43067 / DSM 2661 / JAL-1 / JCM 10045 / NBRC 100440) (Methanococcus jannaschii).